We begin with the raw amino-acid sequence, 315 residues long: Ribosomal RNA small subunit methyltransferase H (315 aa).

Residues 37 to 39 (GGH), D57, F83, D105, and Q112 contribute to the S-adenosyl-L-methionine site.

This sequence belongs to the methyltransferase superfamily. RsmH family.

Its subcellular location is the cytoplasm. It catalyses the reaction cytidine(1402) in 16S rRNA + S-adenosyl-L-methionine = N(4)-methylcytidine(1402) in 16S rRNA + S-adenosyl-L-homocysteine + H(+). Functionally, specifically methylates the N4 position of cytidine in position 1402 (C1402) of 16S rRNA. The sequence is that of Ribosomal RNA small subunit methyltransferase H from Pseudomonas putida (strain ATCC 700007 / DSM 6899 / JCM 31910 / BCRC 17059 / LMG 24140 / F1).